Here is a 546-residue protein sequence, read N- to C-terminus: Alkaline phosphatase PafA (546 aa).

Positions 1-25 are cleaved as a signal peptide; that stretch reads MLTPKKWLLGVLVVSGMLGAQKTNA. Residues D38 and T79 each contribute to the Zn(2+) site. T79 acts as the Phosphothreonine intermediate in catalysis. Substrate contacts are provided by residues N100 and 162–164; that span reads KDR. D305, H309, D352, H353, and H486 together coordinate Zn(2+).

Requires Zn(2+) as cofactor.

The protein resides in the periplasm. The enzyme catalyses a phosphate monoester + H2O = an alcohol + phosphate. With respect to regulation, strongly inhibited by orthovanadate and EDTA. Also inhibited by inorganic phosphate. Alkaline phosphatase with broad substrate specificity. Has phosphatase activity towards nucleotide phosphates with a preference for ATP. Active towards a great variety of phosphomonoesters with the exception of 2',3'-cyclic AMP and myo-inositol hexakisphosphate. The polypeptide is Alkaline phosphatase PafA (Elizabethkingia meningoseptica (Chryseobacterium meningosepticum)).